The sequence spans 353 residues: UPF0283 membrane protein YcjF (353 aa).

Positions 1–19 are enriched in basic and acidic residues; sequence MSEPLKPRIDFAEPLKEEP. The disordered stretch occupies residues 1 to 35; it reads MSEPLKPRIDFAEPLKEEPTSAFKAQQTFSEAESR. The next 3 helical transmembrane spans lie at 70–90, 100–120, and 213–233; these read MVMG…VQWT, VALG…GSVV, and ESTL…FIAW.

This sequence belongs to the UPF0283 family.

Its subcellular location is the cell inner membrane. This Salmonella dublin (strain CT_02021853) protein is UPF0283 membrane protein YcjF.